The following is a 136-amino-acid chain: 5-hydroxyisourate hydrolase (136 aa).

Positions 1–22 (MKRHILATVIASLVAAPAMALA) are cleaved as a signal peptide. Substrate is bound by residues H31, R69, and Y133.

Belongs to the transthyretin family. 5-hydroxyisourate hydrolase subfamily. In terms of assembly, homotetramer.

It localises to the periplasm. It carries out the reaction 5-hydroxyisourate + H2O = 5-hydroxy-2-oxo-4-ureido-2,5-dihydro-1H-imidazole-5-carboxylate + H(+). Its function is as follows. Catalyzes the hydrolysis of 5-hydroxyisourate (HIU) to 2-oxo-4-hydroxy-4-carboxy-5-ureidoimidazoline (OHCU). The protein is 5-hydroxyisourate hydrolase (hiuH) of Salmonella dublin.